Reading from the N-terminus, the 465-residue chain is GTPase Der (465 aa).

EngA-type G domains lie at F3–Y166 and I184–N358. GTP is bound by residues G9 to S16, D56 to I60, N118 to D121, G190 to S197, D237 to V241, and N302 to D305. A KH-like domain is found at K359–E443. The interval F446–K465 is disordered.

This sequence belongs to the TRAFAC class TrmE-Era-EngA-EngB-Septin-like GTPase superfamily. EngA (Der) GTPase family. As to quaternary structure, associates with the 50S ribosomal subunit.

GTPase that plays an essential role in the late steps of ribosome biogenesis. In Francisella tularensis subsp. novicida (strain U112), this protein is GTPase Der.